The sequence spans 353 residues: Putative permease PerM (353 aa).

A run of 7 helical transmembrane segments spans residues isoleucine 19 to leucine 39, isoleucine 72 to alanine 92, leucine 156 to leucine 176, valine 217 to asparagine 237, leucine 240 to valine 260, cysteine 281 to phenylalanine 301, and leucine 310 to phenylalanine 330.

This sequence belongs to the autoinducer-2 exporter (AI-2E) (TC 2.A.86) family.

The protein localises to the cell membrane. The chain is Putative permease PerM (perM) from Escherichia coli O157:H7.